The chain runs to 75 residues: Small ribosomal subunit protein bS18 (75 aa).

The protein belongs to the bacterial ribosomal protein bS18 family. Part of the 30S ribosomal subunit. Forms a tight heterodimer with protein bS6.

Its function is as follows. Binds as a heterodimer with protein bS6 to the central domain of the 16S rRNA, where it helps stabilize the platform of the 30S subunit. The protein is Small ribosomal subunit protein bS18 of Colwellia psychrerythraea (strain 34H / ATCC BAA-681) (Vibrio psychroerythus).